We begin with the raw amino-acid sequence, 371 residues long: Diguanylate cyclase A (371 aa).

The GGDEF domain maps to 233–366; it reads ETLSILMIDI…GRNRVTLSKN (134 aa). Mg(2+)-binding residues include Asp241, Ile242, and Glu284. The active-site Proton acceptor is the Glu284.

Exists as a homodimer and as larger aggregates. Both dimers and aggregates possess DGC activity. Mg(2+) serves as cofactor. It depends on Mn(2+) as a cofactor.

The protein localises to the cytoplasm. The catalysed reaction is 2 GTP = 3',3'-c-di-GMP + 2 diphosphate. With respect to regulation, allosterically regulated by a feedback inhibition loop. Functionally, catalyzes the conversion of GTP to cyclic-di-GMP (c-di-GMP). Shows activity under aerobic and anaerobic reaction conditions. This Treponema denticola (strain ATCC 35405 / DSM 14222 / CIP 103919 / JCM 8153 / KCTC 15104) protein is Diguanylate cyclase A.